Reading from the N-terminus, the 470-residue chain is Cysteine--tRNA ligase (470 aa).

Cysteine 27 is a Zn(2+) binding site. The 'HIGH' region motif lies at 29 to 39 (PTVYNHIHIGN). Residues cysteine 207, histidine 232, and glutamate 236 each contribute to the Zn(2+) site. The 'KMSKS' region motif lies at 265 to 269 (KMAKS). Lysine 268 lines the ATP pocket.

It belongs to the class-I aminoacyl-tRNA synthetase family. In terms of assembly, monomer. Requires Zn(2+) as cofactor.

It localises to the cytoplasm. The catalysed reaction is tRNA(Cys) + L-cysteine + ATP = L-cysteinyl-tRNA(Cys) + AMP + diphosphate. The chain is Cysteine--tRNA ligase from Rubrobacter xylanophilus (strain DSM 9941 / JCM 11954 / NBRC 16129 / PRD-1).